The primary structure comprises 101 residues: Small ribosomal subunit protein uS14 (101 aa).

Basic and acidic residues predominate over residues 1-10 (MAKKSSIEKN). Residues 1–23 (MAKKSSIEKNNRRKRMTGNAAAK) form a disordered region.

This sequence belongs to the universal ribosomal protein uS14 family. Part of the 30S ribosomal subunit. Contacts proteins S3 and S10.

Binds 16S rRNA, required for the assembly of 30S particles and may also be responsible for determining the conformation of the 16S rRNA at the A site. The protein is Small ribosomal subunit protein uS14 of Nitrobacter hamburgensis (strain DSM 10229 / NCIMB 13809 / X14).